A 196-amino-acid chain; its full sequence is Large ribosomal subunit protein bL9 (196 aa).

The segment at 174–196 (QAAADLLEGGAGQQASEYTEAQA) is disordered. A compositionally biased stretch (polar residues) spans 186 to 196 (QQASEYTEAQA).

The protein belongs to the bacterial ribosomal protein bL9 family.

Its function is as follows. Binds to the 23S rRNA. This Phenylobacterium zucineum (strain HLK1) protein is Large ribosomal subunit protein bL9.